Here is a 1159-residue protein sequence, read N- to C-terminus: MVDFLAENNLCGQAILRIVSRGNAIIAELLRLSDFIPAVFRLRDKTDQQKYGDIICDFSYFKGPEYYEGKLEAKPELQDLDEEFRENNIEILTRFYLAFESVHKYVVDLIRCLDDLNEGVYIQQTLETVLLNEDGKQLLCEALYLYGVMLLVIDQKMEGEVRERMLVSYYRYSAARSSADSNLDDICKLLRSTGYSSHPGAKRPTNYPESYFQRVPISSTFISMVIGRLRSDDIYNQVSAYPLPEHRSTALATQAAMLYVCLYFTPSILHTQQAKMREIVDKYFPDNWVISIYMGITVNLVEAWEPYKAAKIALNYTLDTANIREQAGRYAASVETLRPQVQQLLKEGFLREEIILDNIPKLLNCLRDCNVAIRWLMLHTAESAYDPNNKRLRQIKDQVINDSKYNPKILFQLLLDTAQFEFILKEMFKQMLAEKQLKWESYKKEGSERMMELAEVFSGVKPLTRVEKNENLQAWFREISKQIESLNYEDSTAAGRKTVQLIQALVEVQEFHQLESNLQVCQFLADTRKFLHQMIRTINIKEEVLITMQIVGDLSYAWQIIDSFTAIMQESIRANPSMVTKLRATLLKLASALDLPLLRINQVNSPDLLSVSQFYSGELVAYVRKVLQIIPESMFTSLAKIIKLQIHDIMEVPTRLDKDKLKDYSQLSARYEVAKLTHAISVFTEGILMMKTTLVGIIQVDPKQLLEDGIRKELVKRVAYALHKGLIFNPKAKPSELMPKLKEMAATMDGFYRSFEYIQDYVSIYGLKIWQEEVSRIINYNVEQECNSFLRTKIQDWQSVHQSTHIPIPKYPSVDESATFIGRLCREILRITDPKVTCYIDQLNTWYDLRTHQEVTNNRLFSEIQDTLGTFGLNGLDRLLCFMIVKELQNFLTVLQKSILKDKAVVDVFKALLTAVNPVKGIVANASKVYTNAAAKTQKIWSPYLESIMKVGQMQILRQQIANELNYSCKFDSKHLAAALDNLNKSLLSDIEAHYQDPSLPYPKEDNTLLYEITAYLEAAGIHNPLNKIYITTKRLPYFPIVNFLFLIAQLPKLQYNKSQGMACRKPADALDWAPLVLGLLTLLKQFHSRYTEQFLALIGQFIRSIMEQCTSQKIPDMPSDVVGALMFLEDYVRYTKLPRKVAEAHVPSFIFDEFRTVL.

It belongs to the strumpellin family. In terms of assembly, component of the WASH complex.

It localises to the early endosome. Its function is as follows. Acts at least in part as component of the WASH complex which seems to regulate washc1 nucleation-promoting factor (NPF) activity and is required for its membrane targeting during endosomal sorting. In Danio rerio (Zebrafish), this protein is WASH complex subunit 5.